The chain runs to 365 residues: Chorismate synthase (365 aa).

Residue Arg46 coordinates NADP(+). Residues 123 to 125, 241 to 242, Gly281, 296 to 300, and Arg322 contribute to the FMN site; these read RSS, NG, and KPTPS.

It belongs to the chorismate synthase family. In terms of assembly, homotetramer. It depends on FMNH2 as a cofactor.

The enzyme catalyses 5-O-(1-carboxyvinyl)-3-phosphoshikimate = chorismate + phosphate. It participates in metabolic intermediate biosynthesis; chorismate biosynthesis; chorismate from D-erythrose 4-phosphate and phosphoenolpyruvate: step 7/7. In terms of biological role, catalyzes the anti-1,4-elimination of the C-3 phosphate and the C-6 proR hydrogen from 5-enolpyruvylshikimate-3-phosphate (EPSP) to yield chorismate, which is the branch point compound that serves as the starting substrate for the three terminal pathways of aromatic amino acid biosynthesis. This reaction introduces a second double bond into the aromatic ring system. This chain is Chorismate synthase, found in Helicobacter pylori (strain ATCC 700392 / 26695) (Campylobacter pylori).